The chain runs to 180 residues: Cytochrome b6-f complex subunit 4 (180 aa).

The next 3 membrane-spanning stretches (helical) occupy residues 36–56, 95–115, and 131–151; these read LSYI…GLAV, LLGV…PFLE, and TVSL…ALPI.

It belongs to the cytochrome b family. PetD subfamily. The 4 large subunits of the cytochrome b6-f complex are cytochrome b6, subunit IV (17 kDa polypeptide, petD), cytochrome f and the Rieske protein, while the 4 small subunits are petG, petL, petM and petN. The complex functions as a dimer.

It is found in the plastid. The protein localises to the chloroplast thylakoid membrane. In terms of biological role, component of the cytochrome b6-f complex, which mediates electron transfer between photosystem II (PSII) and photosystem I (PSI), cyclic electron flow around PSI, and state transitions. In Pinus thunbergii (Japanese black pine), this protein is Cytochrome b6-f complex subunit 4.